The chain runs to 258 residues: Phosphosulfolactate synthase (258 aa).

The protein belongs to the phosphosulfolactate synthase family.

The catalysed reaction is (2R)-O-phospho-3-sulfolactate = phosphoenolpyruvate + sulfite + H(+). It functions in the pathway cofactor biosynthesis; coenzyme M biosynthesis; sulfoacetaldehyde from phosphoenolpyruvate and sulfite: step 1/4. Catalyzes the addition of sulfite to phosphoenolpyruvate (PEP) to yield (2R)-phospho-3-sulfolactate (PSL). The protein is Phosphosulfolactate synthase (comA) of Methanothermobacter thermautotrophicus (strain ATCC 29096 / DSM 1053 / JCM 10044 / NBRC 100330 / Delta H) (Methanobacterium thermoautotrophicum).